A 104-amino-acid polypeptide reads, in one-letter code: U20-lycotoxin-Ls1d (104 aa).

Residues 1-30 (MFSTSDQVSKMNSRILSALLILGIATCVIA) form the signal peptide. Residues 31 to 76 (GGFCPKSRHPQCNLSYKINDCCAQSDCRVGSVCCVEGCGNVCRAES) enclose the WAP domain. 5 disulfides stabilise this stretch: Cys34-Cys64, Cys42-Cys68, Cys51-Cys63, Cys52-Cys90, and Cys57-Cys72.

Belongs to the venom protein 11 family. 02 (wap-2) subfamily. Contains 5 disulfide bonds. As to expression, expressed by the venom gland.

It localises to the secreted. Has antibacterial activity. This is U20-lycotoxin-Ls1d from Lycosa singoriensis (Wolf spider).